The primary structure comprises 79 residues: Major outer membrane lipoprotein Lpp 2 (79 aa).

The signal sequence occupies residues 1-21 (MNRTNKLILGAVVLGSTLLAG). The N-palmitoyl cysteine moiety is linked to residue Cys22. Cys22 is lipidated: S-diacylglycerol cysteine. 2 repeats span residues 25–35 (NAKIDQLSSDV) and 39–49 (SAKVDQLSNDV). Positions 28–69 (IDQLSSDVQTLSAKVDQLSNDVNAMRSDVQAAKDDAARANQR) form a coiled coil. Lys79 is subject to N6-murein peptidoglycan lysine.

Belongs to the Lpp family. Homotrimer.

The protein localises to the cell outer membrane. Its subcellular location is the secreted. It localises to the cell wall. In terms of biological role, a highly abundant outer membrane lipoprotein that controls the distance between the inner and outer membranes. The only protein known to be covalently linked to the peptidoglycan network (PGN). Also non-covalently binds the PGN. The link between the cell outer membrane and PGN contributes to maintenance of the structural and functional integrity of the cell envelope, and maintains the correct distance between the PGN and the outer membrane. In Salmonella typhi, this protein is Major outer membrane lipoprotein Lpp 2.